The primary structure comprises 614 residues: Chaperone protein DnaK (614 aa).

Residue T173 is modified to Phosphothreonine; by autocatalysis. 2 stretches are compositionally biased toward basic and acidic residues: residues 490–509 and 529–542; these read EENA…RNEA and EEDK…KEAL. Disordered regions lie at residues 490 to 510, 524 to 555, and 575 to 614; these read EENA…NEAD, GENI…DDIK, and QAAQ…DNQK. A compositionally biased stretch (low complexity) spans 575 to 584; that stretch reads QAAQAQQQAQ. A compositionally biased stretch (basic and acidic residues) spans 599–614; sequence ADFKEVKDDDNQDNQK.

Belongs to the heat shock protein 70 family.

Functionally, acts as a chaperone. The polypeptide is Chaperone protein DnaK (Staphylococcus saprophyticus subsp. saprophyticus (strain ATCC 15305 / DSM 20229 / NCIMB 8711 / NCTC 7292 / S-41)).